A 361-amino-acid polypeptide reads, in one-letter code: Queuine tRNA-ribosyltransferase (361 aa).

Catalysis depends on D92, which acts as the Proton acceptor. Substrate is bound by residues D92–F96, D146, Q189, and G216. The segment at G247 to D253 is RNA binding. The active-site Nucleophile is the D266. An RNA binding; important for wobble base 34 recognition region spans residues T271–R275. C304, C306, C309, and H335 together coordinate Zn(2+).

Belongs to the queuine tRNA-ribosyltransferase family. In terms of assembly, homodimer. Within each dimer, one monomer is responsible for RNA recognition and catalysis, while the other monomer binds to the replacement base PreQ1. Requires Zn(2+) as cofactor.

The catalysed reaction is 7-aminomethyl-7-carbaguanine + guanosine(34) in tRNA = 7-aminomethyl-7-carbaguanosine(34) in tRNA + guanine. Its pathway is tRNA modification; tRNA-queuosine biosynthesis. Catalyzes the base-exchange of a guanine (G) residue with the queuine precursor 7-aminomethyl-7-deazaguanine (PreQ1) at position 34 (anticodon wobble position) in tRNAs with GU(N) anticodons (tRNA-Asp, -Asn, -His and -Tyr). Catalysis occurs through a double-displacement mechanism. The nucleophile active site attacks the C1' of nucleotide 34 to detach the guanine base from the RNA, forming a covalent enzyme-RNA intermediate. The proton acceptor active site deprotonates the incoming PreQ1, allowing a nucleophilic attack on the C1' of the ribose to form the product. After dissociation, two additional enzymatic reactions on the tRNA convert PreQ1 to queuine (Q), resulting in the hypermodified nucleoside queuosine (7-(((4,5-cis-dihydroxy-2-cyclopenten-1-yl)amino)methyl)-7-deazaguanosine). This Rickettsia typhi (strain ATCC VR-144 / Wilmington) protein is Queuine tRNA-ribosyltransferase.